The primary structure comprises 187 residues: Adenine phosphoribosyltransferase (187 aa).

The protein belongs to the purine/pyrimidine phosphoribosyltransferase family. As to quaternary structure, homodimer.

The protein resides in the cytoplasm. It carries out the reaction AMP + diphosphate = 5-phospho-alpha-D-ribose 1-diphosphate + adenine. It functions in the pathway purine metabolism; AMP biosynthesis via salvage pathway; AMP from adenine: step 1/1. Its function is as follows. Catalyzes a salvage reaction resulting in the formation of AMP, that is energically less costly than de novo synthesis. The chain is Adenine phosphoribosyltransferase from Yersinia pestis (strain Pestoides F).